The chain runs to 274 residues: Cell division protein FtsQ (274 aa).

The tract at residues 1–24 (MRDLHAKKQRVPHNRVKKPPKERK) is disordered. The Cytoplasmic segment spans residues 1–33 (MRDLHAKKQRVPHNRVKKPPKERKPINWGPILK). The span at 7–21 (KKQRVPHNRVKKPPK) shows a compositional bias: basic residues. The chain crosses the membrane as a helical span at residues 34 to 56 (FASRGFGGAALCAGLGFGGWQLY). Over 57 to 274 (NLVSRTTLLR…YADKIIVKKV (218 aa)) the chain is Periplasmic. Residues 65–133 (LRLEAIEVSP…HTLSITVSER (69 aa)) form the POTRA domain.

This sequence belongs to the FtsQ/DivIB family. FtsQ subfamily.

It is found in the cell inner membrane. In terms of biological role, essential cell division protein. This chain is Cell division protein FtsQ, found in Geobacter sp. (strain M21).